The chain runs to 239 residues: 2,3,4,5-tetrahydropyridine-2,6-dicarboxylate N-acetyltransferase (239 aa).

The protein belongs to the transferase hexapeptide repeat family. DapH subfamily.

The catalysed reaction is (S)-2,3,4,5-tetrahydrodipicolinate + acetyl-CoA + H2O = L-2-acetamido-6-oxoheptanedioate + CoA. The protein operates within amino-acid biosynthesis; L-lysine biosynthesis via DAP pathway; LL-2,6-diaminopimelate from (S)-tetrahydrodipicolinate (acetylase route): step 1/3. Catalyzes the transfer of an acetyl group from acetyl-CoA to tetrahydrodipicolinate. This Staphylococcus haemolyticus (strain JCSC1435) protein is 2,3,4,5-tetrahydropyridine-2,6-dicarboxylate N-acetyltransferase.